The primary structure comprises 987 residues: Leucine--tRNA ligase (987 aa).

The 'HIGH' region signature appears at 69–80 (PYPSGKGLHVGH). A 'KMSKS' region motif is present at residues 760–764 (KMGKS). Lys763 contacts ATP.

This sequence belongs to the class-I aminoacyl-tRNA synthetase family.

The protein localises to the cytoplasm. The enzyme catalyses tRNA(Leu) + L-leucine + ATP = L-leucyl-tRNA(Leu) + AMP + diphosphate. The sequence is that of Leucine--tRNA ligase from Bifidobacterium longum (strain NCC 2705).